A 234-amino-acid polypeptide reads, in one-letter code: Large ribosomal subunit protein uL1 (234 aa).

It belongs to the universal ribosomal protein uL1 family. In terms of assembly, part of the 50S ribosomal subunit.

Binds directly to 23S rRNA. The L1 stalk is quite mobile in the ribosome, and is involved in E site tRNA release. Functionally, protein L1 is also a translational repressor protein, it controls the translation of the L11 operon by binding to its mRNA. The polypeptide is Large ribosomal subunit protein uL1 (Syntrophobacter fumaroxidans (strain DSM 10017 / MPOB)).